A 348-amino-acid chain; its full sequence is D-alanine--D-alanine ligase (348 aa).

Positions 132-334 constitute an ATP-grasp domain; that stretch reads KRVLESAGIP…YAELIEELVR (203 aa). 162 to 217 provides a ligand contact to ATP; that stretch reads EAALSYPVFVKPANMGSSVGISKAESEEELRAAILLALTYDSRILIEQGVLAREIE. Residues D288, E301, and N303 each coordinate Mg(2+).

It belongs to the D-alanine--D-alanine ligase family. Requires Mg(2+) as cofactor. It depends on Mn(2+) as a cofactor.

It localises to the cytoplasm. The catalysed reaction is 2 D-alanine + ATP = D-alanyl-D-alanine + ADP + phosphate + H(+). It functions in the pathway cell wall biogenesis; peptidoglycan biosynthesis. In terms of biological role, cell wall formation. The sequence is that of D-alanine--D-alanine ligase from Streptococcus equi subsp. zooepidemicus (strain H70).